Reading from the N-terminus, the 863-residue chain is Disintegrin and metalloproteinase domain-containing protein 15 (863 aa).

Residues 1–17 (MRLALLWALGLLGAGSP) form the signal peptide. A propeptide spanning residues 18–206 (LPSWPLPNIG…LGQRHIRRRR (189 aa)) is cleaved from the precursor. Residues 22-45 (PLPNIGGTEEQQAESEKAPREPLE) form a disordered region. The span at 35 to 44 (ESEKAPREPL) shows a compositional bias: basic and acidic residues. A Cysteine switch motif is present at residues 177–184 (HTCALSWR). Cysteine 179 lines the Zn(2+) pocket. The Extracellular portion of the chain corresponds to 207 to 696 (DVVTETKTVE…QLKATSSLTT (490 aa)). A Peptidase M12B domain is found at 213-414 (KTVELVIVAD…GMGSCLFERL (202 aa)). The N-linked (GlcNAc...) asparagine glycan is linked to asparagine 237. Intrachain disulfides connect cysteine 323–cysteine 409, cysteine 365–cysteine 393, cysteine 367–cysteine 376, and cysteine 480–cysteine 500. Residue histidine 348 participates in Zn(2+) binding. Glutamate 349 is a catalytic residue. Zn(2+)-binding residues include histidine 352 and histidine 358. N-linked (GlcNAc...) asparagine glycosylation is found at asparagine 389 and asparagine 392. A Disintegrin domain is found at 421–508 (AAFCGNMFVE…QCPPDVSLGD (88 aa)). A Cell attachment site motif is present at residues 484–486 (RGD). N-linked (GlcNAc...) asparagine glycosylation is found at asparagine 606 and asparagine 611. Disulfide bonds link cysteine 657-cysteine 667, cysteine 661-cysteine 673, and cysteine 675-cysteine 684. Residues 657–685 (CRSKCHGHGVCDSNRHCYCEEGWAPPDCT) form the EGF-like domain. The helical transmembrane segment at 697-717 (GLLLSLLVLLVLVMLGASYWY) threads the bilayer. Residues tyrosine 715 and tyrosine 735 each carry the phosphotyrosine; by HCK and LCK modification. Residues 718 to 863 (RARLHQRLCQ…PPPTVSSLYL (146 aa)) are Cytoplasmic-facing. Residues 736 to 863 (RAAQSGPSER…PPPTVSSLYL (128 aa)) are disordered. Residues 767 to 778 (PAPPSRPLPPDP) show a composition bias toward pro residues. Positions 779–789 (VSKRLQAELAD) are enriched in basic and acidic residues. Pro residues-rich tracts occupy residues 791–800 (PNPPTRPLPA) and 813–824 (AKPPPPRKPLPA). 2 short sequence motifs (SH3-binding) span residues 815-821 (PPPPRKP) and 850-856 (RPAPPPP).

As to quaternary structure, interacts with ITAGV-ITGB3 (vitronectin receptor). Interacts with SH3GL2 and SNX9; this interaction occurs preferentially with ADAM15 precursor, rather than the processed form, suggesting it occurs in a secretory pathway compartment prior to the medial Golgi. Interacts with ITAG9-ITGB1. Interacts specifically with Src family protein-tyrosine kinases (PTKs). Interacts with SH3PXD2A. Interacts with ITAGV-ITGB1. Interacts with GRB2, HCK, ITSN1, ITSN2, LYN, MAPK1, MAPK3, NCF1, NCK1, nephrocystin, PTK6, SNX33, LCK and SRC. Zn(2+) serves as cofactor. The precursor is cleaved by a furin endopeptidase. In terms of processing, phosphorylation increases association with PTKs. As to expression, expressed in colon and small intestine. Expressed in airway smooth muscle and glomerular mesangial cells (at protein level). Ubiquitously expressed. Overexpressed in atherosclerotic lesions. Constitutively expressed in cultured endothelium and smooth muscle. Expressed in chondrocytes. Expressed in airway smooth muscle and glomerular mesangial cells.

It localises to the endomembrane system. It is found in the cell junction. Its subcellular location is the adherens junction. The protein localises to the cell projection. The protein resides in the cilium. It localises to the flagellum. It is found in the cytoplasmic vesicle. Its subcellular location is the secretory vesicle. The protein localises to the acrosome. Its activity is regulated as follows. Inhibited by hydroxamate-type metalloproteinase inhibitors such as marimastat. Inhibited by metalloproteinase inhibitor 2 (TIMP-2) and TIMP-3 at nanomolar concentrations. Not significantly inhibited by TIMP-1 at concentrations of up to 100 nM. Not activated by PMA or ionomycin. Functionally, active metalloproteinase with gelatinolytic and collagenolytic activity. Plays a role in the wound healing process. Mediates both heterotypic intraepithelial cell/T-cell interactions and homotypic T-cell aggregation. Inhibits beta-1 integrin-mediated cell adhesion and migration of airway smooth muscle cells. Suppresses cell motility on or towards fibronectin possibly by driving alpha-v/beta-1 integrin (ITAGV-ITGB1) cell surface expression via ERK1/2 inactivation. Cleaves E-cadherin in response to growth factor deprivation. Plays a role in glomerular cell migration. Plays a role in pathological neovascularization. May play a role in cartilage remodeling. May be proteolytically processed, during sperm epididymal maturation and the acrosome reaction. May play a role in sperm-egg binding through its disintegrin domain. This is Disintegrin and metalloproteinase domain-containing protein 15 (ADAM15) from Homo sapiens (Human).